The primary structure comprises 467 residues: Ribosomal protein uS12 methylthiotransferase RimO (467 aa).

Positions 1–27 are disordered; the sequence is MTSNPPDLRPDLAPKPTFGTAPRPDQP. The 111-residue stretch at 27–137 folds into the MTTase N-terminal domain; sequence PTLGMVSLGC…VLDAVHAAVP (111 aa). The [4Fe-4S] cluster site is built by C36, C72, C101, C168, C172, and C175. Residues 154 to 397 enclose the Radical SAM core domain; sequence LTPRHFSYLK…MEKAQAISEA (244 aa). The TRAM domain maps to 400–467; sequence ASKVGQTLQV…GEYDLWGALR (68 aa).

This sequence belongs to the methylthiotransferase family. RimO subfamily. It depends on [4Fe-4S] cluster as a cofactor.

Its subcellular location is the cytoplasm. It carries out the reaction L-aspartate(89)-[ribosomal protein uS12]-hydrogen + (sulfur carrier)-SH + AH2 + 2 S-adenosyl-L-methionine = 3-methylsulfanyl-L-aspartate(89)-[ribosomal protein uS12]-hydrogen + (sulfur carrier)-H + 5'-deoxyadenosine + L-methionine + A + S-adenosyl-L-homocysteine + 2 H(+). Functionally, catalyzes the methylthiolation of an aspartic acid residue of ribosomal protein uS12. This is Ribosomal protein uS12 methylthiotransferase RimO from Ruegeria sp. (strain TM1040) (Silicibacter sp.).